A 103-amino-acid polypeptide reads, in one-letter code: Spherulin-3A (103 aa).

The tract at residues Met1–Lys13 is N-terminal arm. 2 consecutive Beta/gamma crystallin 'Greek key' domains span residues Gly14–Pro55 and Thr57–Thr99.

The protein belongs to the beta/gamma-crystallin family.

Its subcellular location is the cytoplasm. In terms of biological role, structural protein. The chain is Spherulin-3A from Physarum polycephalum (Slime mold).